An 81-amino-acid chain; its full sequence is Teretoxin Tsu6.8 (81 aa).

Positions 1–21 (MATSGRLLCLCLVLGLIFESL) are cleaved as a signal peptide. The propeptide occupies 22-45 (GHPVMGEKRAGENASPSARSLPKR).

This sequence belongs to the teretoxin M (TM) superfamily. Contains 3 disulfide bonds. As to expression, expressed by the venom duct.

It is found in the secreted. The polypeptide is Teretoxin Tsu6.8 (Terebra subulata (Chocolate spotted auger)).